Here is a 620-residue protein sequence, read N- to C-terminus: MSDTDADADTDAVSTTETSMNADANANADGDTLRTPIVAVLGHVDHGKTTLLDTVRGSAVSEDEAGAITQHIGATAVPLETVSEMAGELVDPADFDLPGLLFIDTPGHHSFTTLRSRGGALADIAVVVVDVNDGFQPQTIEALDILQRTGTPFVVAANKVDTTPGWTPTDGSPIQPTYESQPSAARDRLDERLYELIGDLSDEGFSGDLYWRVQNFTKNVGVVPLSAITSEGVPDLLAVLMGLSQRYMREQMAIDITGPGAGTILEVKDERGFGATVDVVLYDGSVRPDDIIVVGGTDGPIVTDVRALLQPRPNAEIRTENRFDRVEIAQAAAGVKIAAPDLDNAMAGAPLRVVRNRDRANVVSEVEAELADIAVETAEEGVVVKADTLGSLEAMANALKEADVPILRAEVGDVAPRDIAIASTANEERNQTVLGFSVDVLSNASDELEESNVRLFTDDVIYQLVDEYKSYVDEQERAQQETVLDKIVRPCRFRILEDHVFRQSSPAVVGVEVLSGTLKNNQYIIKWNGNEPARIGELSGIQEQGEDVSSARAGTRVSIAIDGPTVGRQIEEGDELWVELPEKHAKILEQELIDEIPADELEALTSYLDSHRKRDPFWGK.

Over residues 1 to 10 (MSDTDADADT) the composition is skewed to acidic residues. The segment at 1–29 (MSDTDADADTDAVSTTETSMNADANANAD) is disordered. The span at 11-29 (DAVSTTETSMNADANANAD) shows a compositional bias: low complexity. The 216-residue stretch at 33 to 248 (LRTPIVAVLG…VLMGLSQRYM (216 aa)) folds into the tr-type G domain. Residues 42–49 (GHVDHGKT) form a G1 region. 42–49 (GHVDHGKT) is a GTP binding site. The segment at 67–71 (AITQH) is G2. Residues 104-107 (DTPG) are G3. Residues 104–108 (DTPGH) and 158–161 (NKVD) contribute to the GTP site. The tract at residues 158–161 (NKVD) is G4. Over residues 162–183 (TTPGWTPTDGSPIQPTYESQPS) the composition is skewed to polar residues. The interval 162-185 (TTPGWTPTDGSPIQPTYESQPSAA) is disordered. Residues 226–228 (SAI) form a G5 region.

Belongs to the TRAFAC class translation factor GTPase superfamily. Classic translation factor GTPase family. IF-2 subfamily.

In terms of biological role, function in general translation initiation by promoting the binding of the formylmethionine-tRNA to ribosomes. Seems to function along with eIF-2. In Haloquadratum walsbyi (strain DSM 16790 / HBSQ001), this protein is Probable translation initiation factor IF-2.